A 153-amino-acid polypeptide reads, in one-letter code: Endoribonuclease YbeY (153 aa).

Zn(2+) is bound by residues histidine 113, histidine 117, and histidine 123.

It belongs to the endoribonuclease YbeY family. Zn(2+) serves as cofactor.

It is found in the cytoplasm. Functionally, single strand-specific metallo-endoribonuclease involved in late-stage 70S ribosome quality control and in maturation of the 3' terminus of the 16S rRNA. This Aliivibrio fischeri (strain MJ11) (Vibrio fischeri) protein is Endoribonuclease YbeY.